Here is a 94-residue protein sequence, read N- to C-terminus: Pyrimidine/purine nucleoside phosphorylase (94 aa).

It belongs to the nucleoside phosphorylase PpnP family.

It carries out the reaction a purine D-ribonucleoside + phosphate = a purine nucleobase + alpha-D-ribose 1-phosphate. It catalyses the reaction adenosine + phosphate = alpha-D-ribose 1-phosphate + adenine. The catalysed reaction is cytidine + phosphate = cytosine + alpha-D-ribose 1-phosphate. The enzyme catalyses guanosine + phosphate = alpha-D-ribose 1-phosphate + guanine. It carries out the reaction inosine + phosphate = alpha-D-ribose 1-phosphate + hypoxanthine. It catalyses the reaction thymidine + phosphate = 2-deoxy-alpha-D-ribose 1-phosphate + thymine. The catalysed reaction is uridine + phosphate = alpha-D-ribose 1-phosphate + uracil. The enzyme catalyses xanthosine + phosphate = alpha-D-ribose 1-phosphate + xanthine. Its function is as follows. Catalyzes the phosphorolysis of diverse nucleosides, yielding D-ribose 1-phosphate and the respective free bases. Can use uridine, adenosine, guanosine, cytidine, thymidine, inosine and xanthosine as substrates. Also catalyzes the reverse reactions. This chain is Pyrimidine/purine nucleoside phosphorylase, found in Vibrio parahaemolyticus serotype O3:K6 (strain RIMD 2210633).